The following is a 354-amino-acid chain: Replication-associated protein (354 aa).

One can recognise a CRESS-DNA virus Rep endonuclease domain in the interval 11–114 (LHRNANTFLT…PLAVFERGTF (104 aa)). An RCR-1 motif is present at residues 18–21 (FLTY). The a divalent metal cation site is built by Glu-52, His-60, and His-62. Residues 60 to 62 (HLH) carry the RCR-2 motif. Residue Tyr-100 is the For DNA cleavage activity of the active site. Residues 100–103 (YILK) carry the RCR-3 motif. A divalent metal cation is bound at residue Glu-104. Residues 174–186 (SANKLFPDIQEEF) form an oligomerization region. An ATP-binding site is contributed by 228–235 (GPTRTGKS). The transactivation stretch occupies residues 251–269 (VDWSSYNEDAIYNIVDDIP). A Nuclear localization signal motif is present at residues 291 to 302 (KYGKKKKVQMKS).

Belongs to the geminiviridae Rep protein family. In terms of assembly, homooligomer. Rep binds to repeated DNA motifs (iterons). Forms the O-complex, which is a Rep-DNA complex involved in the initiation of RCR. Part of the C- and V-complexes which are RepA-Rep-DNA complexes involved in the c-sense and v-sense transcription. The cofactor is Mg(2+). It depends on Mn(2+) as a cofactor.

It localises to the host nucleus. Functionally, essential for the replication of viral ssDNA. The closed circular ssDNA genome is first converted to a superhelical dsDNA. Rep binds a specific region at the genome origin of replication. It introduces an endonucleolytic nick within the conserved sequence 5'-TAATATTAC-3' in the intergenic region of the genome present in all geminiviruses, thereby initiating the rolling circle replication (RCR). Following cleavage, binds covalently to the 5'-phosphate of DNA as a tyrosyl ester. The cleavage gives rise to a free 3'-OH that serves as a primer for the cellular DNA polymerase. The polymerase synthesizes the (+) strand DNA by rolling circle mechanism. After one round of replication, a Rep-catalyzed nucleotidyl transfer reaction releases a circular single-stranded virus genome, thereby terminating the replication. Displays origin-specific DNA cleavage, nucleotidyl transferase, ATPase and helicase activities. Acts as an inhibitor of C-sense gene transcription. The protein is Replication-associated protein of Avena sativa (Oat).